The sequence spans 365 residues: GTPase Obg (365 aa).

Residues 1-159 (MKFIDEARIE…RMLKLELKVL (159 aa)) form the Obg domain. Residues 160-334 (ADVGLLGMPN…LIYAIKDHLQ (175 aa)) enclose the OBG-type G domain. Residues 166 to 173 (GMPNAGKS), 191 to 195 (FTTLH), 213 to 216 (DIPG), 284 to 287 (NKLD), and 315 to 317 (SAL) contribute to the GTP site. Ser173 and Thr193 together coordinate Mg(2+).

The protein belongs to the TRAFAC class OBG-HflX-like GTPase superfamily. OBG GTPase family. As to quaternary structure, monomer. The cofactor is Mg(2+).

The protein resides in the cytoplasm. An essential GTPase which binds GTP, GDP and possibly (p)ppGpp with moderate affinity, with high nucleotide exchange rates and a fairly low GTP hydrolysis rate. Plays a role in control of the cell cycle, stress response, ribosome biogenesis and in those bacteria that undergo differentiation, in morphogenesis control. This is GTPase Obg from Cupriavidus necator (strain ATCC 17699 / DSM 428 / KCTC 22496 / NCIMB 10442 / H16 / Stanier 337) (Ralstonia eutropha).